Consider the following 197-residue polypeptide: TM2 domain-containing protein 1 (197 aa).

Residues 1–32 (MAFRWRSLMRFRSTTRLLLLFTFCLTVIHSLG) form the signal peptide. The Extracellular segment spans residues 33 to 105 (NDVDSCDKLH…GFNKTIPCRN (73 aa)). Residues Asn-77, Asn-84, Asn-98, and Asn-105 are each glycosylated (N-linked (GlcNAc...) asparagine). The chain crosses the membrane as a helical span at residues 106–126 (VSGYSYKVAVALSLFLGWIGA). Positions 108 to 155 (GYSYKVAVALSLFLGWIGADRFYLGYPALGLLKFCTVGFCGIGSLVDF) constitute a TM2 domain. The Cytoplasmic segment spans residues 127-143 (DRFYLGYPALGLLKFCT). Residues 144-164 (VGFCGIGSLVDFMLISMQIVG) traverse the membrane as a helical segment. Over 165–197 (PSDGSDYIVDYYGARLTRLSITNETYRRMQPSP) the chain is Extracellular. Asn-187 is a glycosylation site (N-linked (GlcNAc...) asparagine).

Belongs to the TM2 family.

The protein localises to the membrane. The polypeptide is TM2 domain-containing protein 1 (tm2d1) (Danio rerio (Zebrafish)).